The primary structure comprises 1820 residues: MSAGGRDEERRKLADIIHHWNANRLDLFEISQPTEDLEFHGVMRFYFQDKAAGNFATKCIRVSSTATTQDVIETLAEKFRPDMRMLSSPKYSLYEVHVSGERRLDIDEKPLVVQLNWNKDDREGRFVLKNENDAIPAKKAQSNGPEKQEKEGVIQNFKRTLSKKEKKEKKKKEKEALRQASDKEERPSQGDDSENSRLAAEVYKDMPETSFTRTISNPEVVMKRRRQQKLEKRMQEFRSSDGRPDSGGTLRIYADSLKPNIPYKTILLSTTDTADFAVAESLEKYGLEKENPKDYCIARVMLPPGAQHSDERGAKEIILDDDECPLQIFREWPSDKGILVFQLKRRPPDYIPKKMKKHVEGKSLKGKDRADGSGYGSALPPEKLPYLVELSPGRRNHFAYYSYHTYEDGSDSRDKPKLYRLQLSVTEVGTEKFDDNSIQLFGPGIQPHHCDLTNMDGVVTVTPRSMDAETYVDGQRISETTMLQSGMRLQFGTSHVFKFVDPIQDHVLSKRSVDGGLMVKGPRHKPGAVQETTFELGGDVHSGTALPASRSTTRLDSDRVSSASSTAERGMVKPMIRLDQEQEYRRRENRTQDATGPELILPASIEFRESSEDSFLSAIINYTNSSTVHFKLSPTYVLYMACRYVLSSQHRPDISPTERTHKAIAVVNKMVSMMEGVIQKQKNIAGALAFWMANASELLNFIKQDRDLSRITLDAQDVLAHLVQMAFKYLVHCLQSELNNYMPAFLDDPEENSLQRPKIDDVLHTLTGAMSLLRRCRVNAALTIQLFSQLFHFINMWLFNRLVTDPDSGLCSHYWGAIIRQQLGHIEAWAEKQGLELAADCHLSRIVQATTLLTMDKYVPDDIPNINSTCFKLNSLQLQALLQNYHCAPDEPFIPTDLIENVVAVAENTADELARSDGRDVQLEEDPDLQLPFLLPEDGYSCDVVRNIPNGLQEFLDPLCQRGFCRLVPHTRSPGTWTIYFEGADYESHLMRENAELAQPLRKEPEIITVTLKKQNGMGLSIVAAKGAGQDKLGIYVKSVVKGGAADVDGRLAAGDQLLSVDGRSLVGLSQERAAELMTRTSSVVTLEVAKQGAIYHGLATLLNQPSPMMQRISDRRGSGKPRPKSEGFELYNNSAQNGSPESPQMPWTEYSEPKKLPGDDRLMKNRADHRSSPNVANQPPSPGGKGPYTSGTAAKITSVSTGNLCTEEQSPPPRPEAYPIPTQTYTREYFTFPASKSQDRMAPPQSQWPNYEEKPHVHTESNHSSIAIQRVTRSQEELREEKVYQLERHRVEAGMDRKCDSDMWINQSSSVESSTSSQEHLNHSSKSVTPASTLTKSGPGRWKTPAAVLPTPVAVSQPIRTDLPPPPPPPPVHYTSEFDGIPMDLPLPPPPANQAGPQSAQVAAAEWKKREEHQRWYEKEKARLEEERERKRREQERKLGQMRSQTLNPASFSPLATQAKPEKPSTLQRPQETVIRELQPQQQPRTIERKDLQYITISKEELSSGDSLSPDPWKRDAREKLEKQQQMHIVDMLSKEIHELQNKVDRTAEESDRLRKLMLEWQFQKRLQESKQKDEDDDEEEDDDVDTMLIMQRLEAERRARMQDEERRRQQQLEEMRKREAEDRVRQEEDGRHQEEERVKRDAEEKRRQEEGYYSRLEAERRRQHEEAARRLLEPEEPGLSRPPLPRDYEPPSLSSAPCAPPPPPQRNASYLKTQVLSPDSLFTAKFVAYDEEEEDYGPAGPNSYSGSAGTAVGAYDAPREAREKLTRSQDADLPGSSGAPENLTFKERQRLFSQGQDVSDKVKASRKLTELENELNTK.

In terms of domain architecture, Ras-associating 1 spans 39–133; sequence FHGVMRFYFQ…GRFVLKNEND (95 aa). Residues 129–196 are disordered; sequence KNENDAIPAK…PSQGDDSENS (68 aa). Residues 146–186 are a coiled coil; sequence EKQEKEGVIQNFKRTLSKKEKKEKKKKEKEALRQASDKEER. The span at 160–172 shows a compositional bias: basic residues; sequence TLSKKEKKEKKKK. The span at 173 to 189 shows a compositional bias: basic and acidic residues; sequence EKEALRQASDKEERPSQ. Phosphoserine is present on residues S216, S246, and S256. One can recognise a Ras-associating 2 domain in the interval 246 to 348; the sequence is SGGTLRIYAD…LVFQLKRRPP (103 aa). Positions 356–371 are enriched in basic and acidic residues; that stretch reads KKHVEGKSLKGKDRAD. The disordered stretch occupies residues 356–377; that stretch reads KKHVEGKSLKGKDRADGSGYGS. Phosphoserine occurs at positions 391 and 424. The FHA domain occupies 426 to 492; sequence TEVGTEKFDD…LQSGMRLQFG (67 aa). Phosphoserine is present on residues S512, S557, S562, S655, S1083, S1107, S1126, S1140, S1143, S1172, S1173, S1182, and S1199. The segment at 538-569 is disordered; the sequence is GDVHSGTALPASRSTTRLDSDRVSSASSTAER. A Dilute domain is found at 653 to 908; sequence DISPTERTHK…IENVVAVAEN (256 aa). Positions 1007–1093 constitute a PDZ domain; that stretch reads IITVTLKKQN…VVTLEVAKQG (87 aa). Positions 1107–1194 are disordered; the sequence is SPMMQRISDR…GKGPYTSGTA (88 aa). Over residues 1113–1128 the composition is skewed to basic and acidic residues; it reads ISDRRGSGKPRPKSEG. Positions 1132–1143 are enriched in polar residues; it reads YNNSAQNGSPES. Residues 1152–1172 show a composition bias toward basic and acidic residues; the sequence is SEPKKLPGDDRLMKNRADHRS. Positions 1203–1222 are disordered; the sequence is GNLCTEEQSPPPRPEAYPIP. Residue T1232 is modified to Phosphothreonine. Disordered regions lie at residues 1235–1278, 1308–1527, and 1567–1716; these read ASKS…SQEE, QSSS…KQQQ, and RLQE…LKTQ. A Phosphoserine modification is found at S1238. Residues 1252 to 1262 show a composition bias toward basic and acidic residues; sequence YEEKPHVHTES. S1275 carries the phosphoserine modification. The segment covering 1309–1318 has biased composition (low complexity); that stretch reads SSSVESSTSS. Positions 1325 to 1337 are enriched in polar residues; sequence SSKSVTPASTLTK. A Phosphoserine modification is found at S1328. T1330 carries the post-translational modification Phosphothreonine. Residues 1364-1373 show a composition bias toward pro residues; that stretch reads LPPPPPPPPV. The segment covering 1407-1440 has biased composition (basic and acidic residues); it reads EWKKREEHQRWYEKEKARLEEERERKRREQERKL. Positions 1410-1446 form a coiled coil; the sequence is KREEHQRWYEKEKARLEEERERKRREQERKLGQMRSQ. Over residues 1443 to 1457 the composition is skewed to polar residues; it reads MRSQTLNPASFSPLA. Residues 1487–1503 are compositionally biased toward basic and acidic residues; that stretch reads TIERKDLQYITISKEEL. Phosphoserine is present on residues S1499 and S1510. The span at 1513 to 1526 shows a compositional bias: basic and acidic residues; the sequence is PWKRDAREKLEKQQ. Positions 1523–1561 form a coiled coil; the sequence is EKQQQMHIVDMLSKEIHELQNKVDRTAEESDRLRKLMLE. A compositionally biased stretch (acidic residues) spans 1576 to 1587; the sequence is EDDDEEEDDDVD. Positions 1593–1665 form a coiled coil; it reads QRLEAERRAR…SRLEAERRRQ (73 aa). Residues 1595–1675 are compositionally biased toward basic and acidic residues; that stretch reads LEAERRARMQ…HEEAARRLLE (81 aa). Phosphoserine occurs at positions 1694, 1719, 1770, and 1795. The interval 1734–1820 is disordered; sequence EEEDYGPAGP…TELENELNTK (87 aa). The span at 1759-1772 shows a compositional bias: basic and acidic residues; that stretch reads APREAREKLTRSQD. Residues 1800–1820 are compositionally biased toward basic and acidic residues; it reads VSDKVKASRKLTELENELNTK. K1803 carries the N6-acetyllysine modification.

As to quaternary structure, homodimer. Interacts with F-actin, nectin and NECTIN3. Essential for the association of nectin and E-cadherin. Isoform 2/s-afadin does not interact with F-actin. Interacts with ZO-1 and occludin, but probably in an indirect manner. Interacts with RIT1, RIT2, NRXN1 and BCR. Interacts with ADAM10; the interaction locks ADAM10 at adherens junctions following ADAM10 recruitment to adherens junctions by TSPAN33. In terms of tissue distribution, isoform 1 is expressed only in a restricted set of epithelial structures during early embryogenesis.

It localises to the cell junction. Its subcellular location is the adherens junction. Functionally, belongs to an adhesion system, probably together with the E-cadherin-catenin system, which plays a role in the organization of homotypic, interneuronal and heterotypic cell-cell adherens junctions (AJs). Nectin- and actin-filament-binding protein that connects nectin to the actin cytoskeleton. May play a key role in the organization of epithelial structures of the embryonic ectoderm. Essential for the organization of adherens junctions. This is Afadin from Mus musculus (Mouse).